We begin with the raw amino-acid sequence, 342 residues long: N-acetyl-gamma-glutamyl-phosphate reductase (342 aa).

Cys-147 is a catalytic residue.

Belongs to the NAGSA dehydrogenase family. Type 1 subfamily.

It localises to the cytoplasm. The catalysed reaction is N-acetyl-L-glutamate 5-semialdehyde + phosphate + NADP(+) = N-acetyl-L-glutamyl 5-phosphate + NADPH + H(+). The protein operates within amino-acid biosynthesis; L-arginine biosynthesis; N(2)-acetyl-L-ornithine from L-glutamate: step 3/4. In terms of biological role, catalyzes the NADPH-dependent reduction of N-acetyl-5-glutamyl phosphate to yield N-acetyl-L-glutamate 5-semialdehyde. This chain is N-acetyl-gamma-glutamyl-phosphate reductase, found in Campylobacter jejuni subsp. jejuni serotype O:6 (strain 81116 / NCTC 11828).